We begin with the raw amino-acid sequence, 654 residues long: Fructose-1,6-bisphosphatase class 3 (654 aa).

Residues 288–307 are disordered; it reads NPAFKPKKRPDKHERLTQRE. Basic and acidic residues predominate over residues 298-307; that stretch reads DKHERLTQRE.

Belongs to the FBPase class 3 family. The cofactor is Mn(2+).

It carries out the reaction beta-D-fructose 1,6-bisphosphate + H2O = beta-D-fructose 6-phosphate + phosphate. The protein operates within carbohydrate biosynthesis; gluconeogenesis. The chain is Fructose-1,6-bisphosphatase class 3 from Staphylococcus aureus (strain bovine RF122 / ET3-1).